A 142-amino-acid chain; its full sequence is Transcriptional regulator MraZ (142 aa).

SpoVT-AbrB domains follow at residues Thr5–Glu46 and Ala75–Ala118.

It belongs to the MraZ family. Forms oligomers.

It localises to the cytoplasm. It is found in the nucleoid. The sequence is that of Transcriptional regulator MraZ from Tropheryma whipplei (strain TW08/27) (Whipple's bacillus).